The chain runs to 122 residues: Ribosomal silencing factor RsfS (122 aa).

The protein belongs to the Iojap/RsfS family. Interacts with ribosomal protein uL14 (rplN).

The protein resides in the cytoplasm. Functionally, functions as a ribosomal silencing factor. Interacts with ribosomal protein uL14 (rplN), blocking formation of intersubunit bridge B8. Prevents association of the 30S and 50S ribosomal subunits and the formation of functional ribosomes, thus repressing translation. The chain is Ribosomal silencing factor RsfS from Chromobacterium violaceum (strain ATCC 12472 / DSM 30191 / JCM 1249 / CCUG 213 / NBRC 12614 / NCIMB 9131 / NCTC 9757 / MK).